Consider the following 148-residue polypeptide: uncharacterized protein (148 aa).

Disordered stretches follow at residues 1–86 and 122–148; these read MCPP…VQSP and RAHRLPQPKPPCQSRQRPSPDSQTSPC. The segment covering 38–57 has biased composition (basic residues); it reads RPPKMQRRPRPPVAKRRRFP. The span at 134–148 shows a compositional bias: polar residues; that stretch reads QSRQRPSPDSQTSPC.

This sequence belongs to the Epstein-Barr virus BLLF2 family.

This is an uncharacterized protein from Homo sapiens (Human).